A 338-amino-acid chain; its full sequence is Heat-inducible transcription repressor HrcA (338 aa).

Belongs to the HrcA family.

In terms of biological role, negative regulator of class I heat shock genes (grpE-dnaK-dnaJ and groELS operons). Prevents heat-shock induction of these operons. This is Heat-inducible transcription repressor HrcA from Bacillus cereus (strain B4264).